The primary structure comprises 291 residues: Small ribosomal subunit protein uS2 (291 aa).

Residues 231–291 form a disordered region; sequence NRGSGTTEAP…AAEAPAEDAK (61 aa). The span at 246–259 shows a compositional bias: basic and acidic residues; the sequence is EWERELLEGSKAEE. Residues 260-285 show a composition bias toward low complexity; that stretch reads AAAAAPAENAEAPAAPAAEAPAAAEA.

This sequence belongs to the universal ribosomal protein uS2 family.

The chain is Small ribosomal subunit protein uS2 from Pseudarthrobacter chlorophenolicus (strain ATCC 700700 / DSM 12829 / CIP 107037 / JCM 12360 / KCTC 9906 / NCIMB 13794 / A6) (Arthrobacter chlorophenolicus).